The chain runs to 73 residues: Kappa-scoloptoxin(03)-Ssm1b (73 aa).

Residues Met1 to Ser23 form the signal peptide. 3 cysteine pairs are disulfide-bonded: Cys32/Cys58, Cys41/Cys57, and Cys44/Cys67.

Contains 3 disulfide bonds. In terms of tissue distribution, expressed by the venom gland.

The protein resides in the secreted. Functionally, inhibits voltage-gated potassium channels. In Scolopendra mutilans (Chinese red-headed centipede), this protein is Kappa-scoloptoxin(03)-Ssm1b.